Reading from the N-terminus, the 90-residue chain is DNA-binding protein HU-beta (90 aa).

This sequence belongs to the bacterial histone-like protein family. In terms of assembly, heterodimer of an alpha and a beta chain.

Functionally, histone-like DNA-binding protein which is capable of wrapping DNA to stabilize it, and thus to prevent its denaturation under extreme environmental conditions. The chain is DNA-binding protein HU-beta (hupB) from Pseudomonas fluorescens (strain ATCC BAA-477 / NRRL B-23932 / Pf-5).